A 471-amino-acid polypeptide reads, in one-letter code: Eukaryotic translation initiation factor 3 subunit L (471 aa).

One can recognise a PCI domain in the interval aspartate 252 to leucine 446.

The protein belongs to the eIF-3 subunit L family.

Its subcellular location is the cytoplasm. Component of the eukaryotic translation initiation factor 3 (eIF-3) complex, which is involved in protein synthesis of a specialized repertoire of mRNAs and, together with other initiation factors, stimulates binding of mRNA and methionyl-tRNAi to the 40S ribosome. The eIF-3 complex specifically targets and initiates translation of a subset of mRNAs involved in cell proliferation. The chain is Eukaryotic translation initiation factor 3 subunit L from Pyricularia oryzae (strain Y34) (Rice blast fungus).